The following is a 487-amino-acid chain: Lysophospholipid acyltransferase 5 (487 aa).

N-acetylalanine is present on alanine 2. The next 6 membrane-spanning stretches (helical) occupy residues 44-64, 84-104, 111-131, 180-200, 227-247, and 285-305; these read LIISIFLGYPFALFYRHYLFY, FNFGNQLYHSLLCIVLQFLIL, ITAVLTTFCFQMAYLLAGYYY, GVPSLLEVAGFSYFYGAFLVG, IIPALKRLSLGLFYLVGYTLL, and VTCWLVTEGVCILTGLGFNGF. Residues asparagine 338 and histidine 374 contribute to the active site. A run of 3 helical transmembrane segments spans residues 364–384, 422–442, and 453–473; these read GLSLLFLALWHGLHSGYLVCF, LVQQTIHWLFMGYSMTAFCLF, and SIYFLGHIFFLSLLFILPYIH. The Di-lysine motif motif lies at 484–487; it reads KKME.

The protein belongs to the membrane-bound acyltransferase family. Highly expressed in liver, pancreas and adipose tissue. Very low expression in skeletal muscle and heart. Detected in neutrophils.

Its subcellular location is the endoplasmic reticulum membrane. It carries out the reaction a 1-acyl-sn-glycero-3-phosphocholine + an acyl-CoA = a 1,2-diacyl-sn-glycero-3-phosphocholine + CoA. The enzyme catalyses a 1-acyl-sn-glycero-3-phosphoethanolamine + an acyl-CoA = a 1,2-diacyl-sn-glycero-3-phosphoethanolamine + CoA. The catalysed reaction is a 1-acyl-sn-glycero-3-phospho-L-serine + an acyl-CoA = a 1,2-diacyl-sn-glycero-3-phospho-L-serine + CoA. It catalyses the reaction (9Z,12Z)-octadecadienoyl-CoA + a 1-acyl-sn-glycero-3-phosphocholine = 1-acyl-2-(9Z,12Z)-octadecadienoyl-sn-glycero-3-phosphocholine + CoA. It carries out the reaction (5Z,8Z,11Z,14Z)-eicosatetraenoyl-CoA + a 1-acyl-sn-glycero-3-phosphocholine = 1-acyl-2-(5Z,8Z,11Z,14Z-eicosatetraenoyl)-sn-glycero-3-phosphocholine + CoA. The enzyme catalyses dodecanoyl-CoA + 1-hexadecanoyl-sn-glycero-3-phosphocholine = 1-hexadecanoyl-2-dodecanoyl-sn-glycero-3-phosphocholine + CoA. The catalysed reaction is octadecanoyl-CoA + 1-hexadecanoyl-sn-glycero-3-phosphocholine = 1-hexadecanoyl-2-octadecanoyl-sn-glycero-3-phosphocholine + CoA. It catalyses the reaction 1-dodecanoyl-sn-glycero-3-phosphocholine + hexadecanoyl-CoA = 1-dodecanoyl-2-hexadecanoyl-sn-glycero-3-phosphocholine + CoA. It carries out the reaction 1-tetradecanoyl-sn-glycero-3-phosphocholine + hexadecanoyl-CoA = 1-tetradecanoyl-2-hexadecanoyl-sn-glycero-3-phosphocholine + CoA. The enzyme catalyses 1-hexadecanoyl-sn-glycero-3-phosphocholine + hexadecanoyl-CoA = 1,2-dihexadecanoyl-sn-glycero-3-phosphocholine + CoA. The catalysed reaction is 1-octadecanoyl-sn-glycero-3-phosphocholine + hexadecanoyl-CoA = 1-octadecanoyl-2-hexadecanoyl-sn-glycero-3-phosphocholine + CoA. It catalyses the reaction 1-(9Z-octadecenoyl)-sn-glycero-3-phosphocholine + hexadecanoyl-CoA = 1-(9Z-octadecenoyl)-2-hexadecanoyl-sn-glycero-3-phosphocholine + CoA. It carries out the reaction (9Z)-hexadecenoyl-CoA + 1-hexadecanoyl-sn-glycero-3-phosphocholine = 1-hexadecanoyl-2-(9Z-hexadecenoyl)-sn-glycero-3-phosphocholine + CoA. The enzyme catalyses 1-hexadecanoyl-sn-glycero-3-phosphocholine + (9Z)-octadecenoyl-CoA = 1-hexadecanoyl-2-(9Z-octadecenoyl)-sn-glycero-3-phosphocholine + CoA. The catalysed reaction is (9Z,12Z)-octadecadienoyl-CoA + 1-hexadecanoyl-sn-glycero-3-phosphocholine = 1-hexadecanoyl-2-(9Z,12Z-octadecadienoyl)-sn-glycero-3-phosphocholine + CoA. It catalyses the reaction 1-dodecanoyl-sn-glycero-3-phosphocholine + (5Z,8Z,11Z,14Z)-eicosatetraenoyl-CoA = 1-dodecanoyl-2-(5Z,8Z,11Z,14Z)-eicosatetraenoyl-sn-glycero-3-phosphocholine + CoA. It carries out the reaction (5Z,8Z,11Z,14Z)-eicosatetraenoyl-CoA + 1-hexadecanoyl-sn-glycero-3-phosphocholine = 1-hexadecanoyl-2-(5Z,8Z,11Z,14Z-eicosatetraenoyl)-sn-glycero-3-phosphocholine + CoA. The enzyme catalyses 1-octadecanoyl-sn-glycero-3-phosphocholine + (5Z,8Z,11Z,14Z)-eicosatetraenoyl-CoA = 1-octadecanoyl-2-(5Z,8Z,11Z,14Z-eicosatetraenoyl)-sn-glycero-3-phosphocholine + CoA. The catalysed reaction is 1-eicosanoyl-sn-glycero-3-phosphocholine + (5Z,8Z,11Z,14Z)-eicosatetraenoyl-CoA = 1-eicosanoyl-2-(5Z,8Z,11Z,14Z)-eicosatetraenoyl-sn-glycero-3-phosphocholine + CoA. It catalyses the reaction 1-(9Z-octadecenoyl)-sn-glycero-3-phosphocholine + (9Z)-octadecenoyl-CoA = 1,2-di-(9Z-octadecenoyl)-sn-glycero-3-phosphocholine + CoA. It carries out the reaction 1-(9Z-octadecenoyl)-sn-glycero-3-phosphocholine + (9Z,12Z)-octadecadienoyl-CoA = 1-(9Z)-octadecenoyl-2-(9Z,12Z)-octadecadienoyl-sn-glycero-3-phosphocholine + CoA. The enzyme catalyses 1-(9Z-octadecenoyl)-sn-glycero-3-phosphocholine + (5Z,8Z,11Z,14Z)-eicosatetraenoyl-CoA = 1-(9Z)-octadecenoyl-2-(5Z,8Z,11Z,14Z)-icosatetraenoyl-sn-glycero-3-phosphocholine + CoA. The catalysed reaction is a 1-acyl-sn-glycero-3-phosphoethanolamine + (9Z,12Z)-octadecadienoyl-CoA = 1-acyl-2-(9Z,12Z)-octadecadienoyl-sn-glycero-3-phosphoethanolamine + CoA. It catalyses the reaction 1-(9Z-octadecenoyl)-sn-glycero-3-phosphoethanolamine + (9Z,12Z)-octadecadienoyl-CoA = 1-(9Z)-octadecenoyl-2-(9Z,12Z)-octadecadienoyl-sn-glycero-3-phosphoethanolamine + CoA. It carries out the reaction 1-(10Z-heptadecenoyl)-sn-glycero-3-phosphoethanolamine + (9Z,12Z)-octadecadienoyl-CoA = 1-(10Z-heptadecenoyl)-2-(9Z,12Z-octadecadienoyl)-sn-glycero-3-phosphoethanolamine + CoA. The enzyme catalyses a 1-acyl-sn-glycero-3-phosphoethanolamine + (5Z,8Z,11Z,14Z)-eicosatetraenoyl-CoA = 1-acyl-2-(5Z,8Z,11Z,14Z)-eicosatetraenoyl-sn-glycero-3-phosphoethanolamine + CoA. The catalysed reaction is 1-hexadecanoyl-sn-glycero-3-phosphoethanolamine + (5Z,8Z,11Z,14Z)-eicosatetraenoyl-CoA = 1-hexadecanoyl-2-(5Z,8Z,11Z,14Z-eicosatetraenoyl)-sn-glycero-3-phosphoethanolamine + CoA. It catalyses the reaction 1-(9Z-octadecenoyl)-sn-glycero-3-phosphoethanolamine + (5Z,8Z,11Z,14Z)-eicosatetraenoyl-CoA = 1-(9Z)-octadecenoyl-2-(5Z,8Z,11Z,14Z)-eicosatetraenoyl-sn-glycero-3-phosphoethanolamine + CoA. It carries out the reaction 1-(10Z-heptadecenoyl)-sn-glycero-3-phosphoethanolamine + (5Z,8Z,11Z,14Z)-eicosatetraenoyl-CoA = 1-(10Z-heptadecenoyl)-2-(5Z,8Z,11Z,14Z-eicosatetraenoyl)-sn-glycero-3-phosphoethanolamine + CoA. The enzyme catalyses a 1-O-(1Z-alkenyl)-sn-glycero-3-phosphoethanolamine + (5Z,8Z,11Z,14Z)-eicosatetraenoyl-CoA = 1-O-(1Z)-alkenyl-2-(5Z,8Z,11Z,14Z)-eicosatetraenoyl-sn-glycero-3-phosphoethanolamine + CoA. The catalysed reaction is a 1-acyl-sn-glycero-3-phospho-L-serine + (9Z,12Z)-octadecadienoyl-CoA = 1-acyl-2-(9Z,12Z-octadecadienoyl)-sn-glycero-3-phospho-L-serine + CoA. It catalyses the reaction a 1-acyl-sn-glycero-3-phospho-L-serine + (5Z,8Z,11Z,14Z)-eicosatetraenoyl-CoA = 1-acyl-2-(5Z,8Z,11Z,14Z-eicosatetraenoyl)-sn-glycero-3-phospho-L-serine + CoA. It carries out the reaction 1-hexadecanoyl-sn-glycero-3-phospho-L-serine + (9Z)-octadecenoyl-CoA = 1-hexadecanoyl-2-(9Z-octadecenoyl)-sn-glycero-3-phospho-L-serine + CoA. The enzyme catalyses 1-(9Z-octadecenoyl)-sn-glycero-3-phospho-L-serine + (9Z)-octadecenoyl-CoA = 1,2-di-(9Z)-octadecenoyl-sn-glycero-3-phospho-L-serine + CoA. The catalysed reaction is 1-hexadecanoyl-sn-glycero-3-phospho-L-serine + (9Z,12Z)-octadecadienoyl-CoA = 1-hexadecanoyl-2-(9Z,12Z-octadecadienoyl)-sn-glycero-3-phospho-L-serine + CoA. It catalyses the reaction 1-(9Z-octadecenoyl)-sn-glycero-3-phospho-L-serine + (9Z,12Z)-octadecadienoyl-CoA = 1-(9Z-octadecenoyl)-2-(9Z,12Z-octadienoyl)-sn-glycero-3-phospho-L-serine + CoA. It carries out the reaction 1-hexadecanoyl-sn-glycero-3-phospho-L-serine + (5Z,8Z,11Z,14Z)-eicosatetraenoyl-CoA = 1-hexadecanoyl-2-(5Z,8Z,11Z,14Z-eicosatetraenoyl)-sn-glycero-3-phospho-L-serine + CoA. The enzyme catalyses 1-(9Z-octadecenoyl)-sn-glycero-3-phospho-L-serine + (5Z,8Z,11Z,14Z)-eicosatetraenoyl-CoA = 1-(9Z-octadecenoyl)-2-(5Z,8Z,11Z,14Z-eicosatetraenoyl)-sn-glycero-3-phospho-L-serine + CoA. Its pathway is lipid metabolism; phospholipid metabolism. Activity is inhibited by thimerosal. Its function is as follows. Lysophospholipid O-acyltransferase (LPLAT) that catalyzes the reacylation step of the phospholipid remodeling process also known as the Lands cycle. Catalyzes transfer of the fatty acyl chain from fatty acyl-CoA to 1-acyl lysophospholipid to form various classes of phospholipids. Converts 1-acyl lysophosphatidylcholine (LPC) into phosphatidylcholine (PC) (LPCAT activity), 1-acyl lysophosphatidylserine (LPS) into phosphatidylserine (PS) (LPSAT activity) and 1-acyl lysophosphatidylethanolamine (LPE) into phosphatidylethanolamine (PE) (LPEAT activity). Favors polyunsaturated fatty acyl-CoAs as acyl donors compared to saturated fatty acyl-CoAs. Has higher activity for LPC acyl acceptors compared to LPEs and LPSs. Can also transfer the fatty acyl chain from fatty acyl-CoA to 1-O-alkyl lysophospholipid or 1-O-alkenyl lysophospholipid with lower efficiency. Acts as a major LPC O-acyltransferase in liver and intestine. As a component of the liver X receptor/NR1H3 or NR1H2 signaling pathway, mainly catalyzes the incorporation of arachidonate into PCs of endoplasmic reticulum (ER) membranes, increasing membrane dynamics and enabling triacylglycerols transfer to nascent very low-density lipoprotein (VLDL) particles. Promotes processing of sterol regulatory protein SREBF1 in hepatocytes, likely by facilitating the translocation of SREBF1-SCAP complex from ER to the Golgi apparatus. Participates in mechanisms by which the liver X receptor/NR1H3 or NR1H2 signaling pathway counteracts lipid-induced ER stress response and inflammation. Down-regulates hepatic inflammation by limiting arachidonic acid availability for synthesis of inflammatory eicosanoids, such as prostaglandins. In enterocytes, acts as a component of a gut-brain feedback loop that coordinates dietary lipid absorption and food intake. Regulates the abundance of PCs containing linoleate and arachidonate in enterocyte membranes, enabling passive diffusion of fatty acids and cholesterol across the membrane for efficient chylomicron assembly. In the intestinal crypt, acts as a component of dietary-responsive phospholipid-cholesterol axis, regulating the biosynthesis of cholesterol and its mitogenic effects on intestinal stem cells. The chain is Lysophospholipid acyltransferase 5 (LPCAT3) from Homo sapiens (Human).